The sequence spans 545 residues: CTP synthase (545 aa).

Residues methionine 1–isoleucine 266 form an amidoligase domain region. A CTP-binding site is contributed by serine 14. Serine 14 is a binding site for UTP. Residues serine 15 to isoleucine 20 and aspartate 72 each bind ATP. Residues aspartate 72 and glutamate 140 each contribute to the Mg(2+) site. Residues aspartate 147–glutamate 149, lysine 187–glutamine 192, and lysine 223 contribute to the CTP site. Residues lysine 187–glutamine 192 and lysine 223 each bind UTP. Lysine 239–valine 241 provides a ligand contact to ATP. The Glutamine amidotransferase type-1 domain occupies threonine 291–glycine 542. L-glutamine is bound at residue glycine 352. The active-site Nucleophile; for glutamine hydrolysis is cysteine 379. L-glutamine is bound by residues leucine 380–glutamine 383, glutamate 403, and arginine 470. Catalysis depends on residues histidine 515 and glutamate 517.

Belongs to the CTP synthase family. In terms of assembly, homotetramer.

The catalysed reaction is UTP + L-glutamine + ATP + H2O = CTP + L-glutamate + ADP + phosphate + 2 H(+). It catalyses the reaction L-glutamine + H2O = L-glutamate + NH4(+). It carries out the reaction UTP + NH4(+) + ATP = CTP + ADP + phosphate + 2 H(+). It functions in the pathway pyrimidine metabolism; CTP biosynthesis via de novo pathway; CTP from UDP: step 2/2. Allosterically activated by GTP, when glutamine is the substrate; GTP has no effect on the reaction when ammonia is the substrate. The allosteric effector GTP functions by stabilizing the protein conformation that binds the tetrahedral intermediate(s) formed during glutamine hydrolysis. Inhibited by the product CTP, via allosteric rather than competitive inhibition. Functionally, catalyzes the ATP-dependent amination of UTP to CTP with either L-glutamine or ammonia as the source of nitrogen. Regulates intracellular CTP levels through interactions with the four ribonucleotide triphosphates. The chain is CTP synthase from Vibrio cholerae serotype O1 (strain ATCC 39541 / Classical Ogawa 395 / O395).